The sequence spans 193 residues: Outer-membrane lipoprotein LolB (193 aa).

Positions 1-21 (MRPARRFLAALACVAGALLSA) are cleaved as a signal peptide. Cysteine 22 is lipidated: N-palmitoyl cysteine. The S-diacylglycerol cysteine moiety is linked to residue cysteine 22.

This sequence belongs to the LolB family. Monomer.

It localises to the cell outer membrane. Plays a critical role in the incorporation of lipoproteins in the outer membrane after they are released by the LolA protein. This Azoarcus sp. (strain BH72) protein is Outer-membrane lipoprotein LolB.